A 197-amino-acid polypeptide reads, in one-letter code: Imidazoleglycerol-phosphate dehydratase (197 aa).

The protein belongs to the imidazoleglycerol-phosphate dehydratase family.

It is found in the cytoplasm. The enzyme catalyses D-erythro-1-(imidazol-4-yl)glycerol 3-phosphate = 3-(imidazol-4-yl)-2-oxopropyl phosphate + H2O. Its pathway is amino-acid biosynthesis; L-histidine biosynthesis; L-histidine from 5-phospho-alpha-D-ribose 1-diphosphate: step 6/9. The protein is Imidazoleglycerol-phosphate dehydratase of Pseudomonas fluorescens (strain ATCC BAA-477 / NRRL B-23932 / Pf-5).